A 404-amino-acid polypeptide reads, in one-letter code: Riboflavin biosynthesis protein RibBA (404 aa).

A DHBP synthase region spans residues 1–204 (MEELKLNTIE…IRDLIAYRLK (204 aa)). D-ribulose 5-phosphate is bound by residues 30-31 (RE), D35, 143-147 (RAGHT), and E167. Mg(2+) is bound at residue E31. H146 serves as a coordination point for Mg(2+). Positions 205 to 404 (QESLVEKGVE…RMGHTLHFNK (200 aa)) are GTP cyclohydrolase II. 255-259 (RVHSS) contacts GTP. Residues C260, C271, and C273 each coordinate Zn(2+). GTP-binding positions include Q276, 298–300 (EGR), and T320. The Proton acceptor; for GTP cyclohydrolase activity role is filled by D332. R334 serves as the catalytic Nucleophile; for GTP cyclohydrolase activity. GTP contacts are provided by T355 and K360.

This sequence in the N-terminal section; belongs to the DHBP synthase family. It in the C-terminal section; belongs to the GTP cyclohydrolase II family. Mg(2+) is required as a cofactor. Requires Mn(2+) as cofactor. It depends on Zn(2+) as a cofactor.

It carries out the reaction D-ribulose 5-phosphate = (2S)-2-hydroxy-3-oxobutyl phosphate + formate + H(+). The catalysed reaction is GTP + 4 H2O = 2,5-diamino-6-hydroxy-4-(5-phosphoribosylamino)-pyrimidine + formate + 2 phosphate + 3 H(+). It functions in the pathway cofactor biosynthesis; riboflavin biosynthesis; 2-hydroxy-3-oxobutyl phosphate from D-ribulose 5-phosphate: step 1/1. Its pathway is cofactor biosynthesis; riboflavin biosynthesis; 5-amino-6-(D-ribitylamino)uracil from GTP: step 1/4. Functionally, catalyzes the conversion of D-ribulose 5-phosphate to formate and 3,4-dihydroxy-2-butanone 4-phosphate. In terms of biological role, catalyzes the conversion of GTP to 2,5-diamino-6-ribosylamino-4(3H)-pyrimidinone 5'-phosphate (DARP), formate and pyrophosphate. This Phocaeicola vulgatus (strain ATCC 8482 / DSM 1447 / JCM 5826 / CCUG 4940 / NBRC 14291 / NCTC 11154) (Bacteroides vulgatus) protein is Riboflavin biosynthesis protein RibBA.